Reading from the N-terminus, the 233-residue chain is Movement and silencing protein TGBp1 (233 aa).

Residues 1–134 (MDCKYLLELL…ALLNGIFGCQ (134 aa)) form the (+)RNA virus helicase ATP-binding domain. One can recognise a (+)RNA virus helicase C-terminal domain in the interval 135-233 (IKSRREDLCH…EFDAWSHATC (99 aa)).

This sequence belongs to the Tymovirales TGBp1 protein family. Homodimer and homooligomer. Interacts with capsid protein. Interacts with host AGO1; this interaction targets the host protein for degradation, thereby suppressing the antiviral RNA silencing.

The protein resides in the host cytoplasm. In terms of biological role, transports viral genome to neighboring plant cells directly through plasmosdesmata, without any budding. The movement protein allows efficient cell to cell propagation, by bypassing the host cell wall barrier. Increases plasmodesma size exclusion limit. Acts as a suppressor of RNA-mediated gene silencing, also known as post-transcriptional gene silencing (PTGS), a mechanism of plant viral defense that limits the accumulation of viral RNAs. This Narcissus mosaic virus (NMV) protein is Movement and silencing protein TGBp1.